The sequence spans 220 residues: Probable septum site-determining protein MinC (220 aa).

It belongs to the MinC family. As to quaternary structure, interacts with MinD and FtsZ.

In terms of biological role, cell division inhibitor that blocks the formation of polar Z ring septums. Rapidly oscillates between the poles of the cell to destabilize FtsZ filaments that have formed before they mature into polar Z rings. Prevents FtsZ polymerization. The chain is Probable septum site-determining protein MinC from Photobacterium profundum (strain SS9).